The chain runs to 333 residues: Transaldolase (333 aa).

Residue lysine 135 is the Schiff-base intermediate with substrate of the active site.

This sequence belongs to the transaldolase family. Type 1 subfamily. In terms of assembly, homodimer.

Its subcellular location is the cytoplasm. The enzyme catalyses D-sedoheptulose 7-phosphate + D-glyceraldehyde 3-phosphate = D-erythrose 4-phosphate + beta-D-fructose 6-phosphate. It participates in carbohydrate degradation; pentose phosphate pathway; D-glyceraldehyde 3-phosphate and beta-D-fructose 6-phosphate from D-ribose 5-phosphate and D-xylulose 5-phosphate (non-oxidative stage): step 2/3. Its function is as follows. Transaldolase is important for the balance of metabolites in the pentose-phosphate pathway. This Prochlorococcus marinus (strain MIT 9301) protein is Transaldolase.